We begin with the raw amino-acid sequence, 395 residues long: Phosphoprotein (395 aa).

A nuclear localization signal (NLS) region spans residues 65–72; it reads PVKPRRKK. The interval 178-217 is disordered; it reads NGVLHGSEIRSKSSSGVIPGVPQSRPQLASSPAHADPAPA. The segment covering 206–217 has biased composition (low complexity); sequence ASSPAHADPAPA. Residues 225–234 form a nuclear export signal (NES) region; that stretch reads IIELLKGLDL.

This sequence belongs to the rubulavirus/avulavirus P protein family. Interacts with host ARHGAP26; this interaction promotes host RHOA activation. Interacts with host KPNA1 and KPNA6.

The protein resides in the host cytoplasm. Functionally, essential component of the RNA polymerase and the nascent chain assembly complex. Also required during RNA synthesis. Also plays a role in viral growth by promoting host RHOA activation and thus actin formation via ARHGAP26 inhibition. This is Phosphoprotein (P/V) from Human parainfluenza 2 virus (HPIV-2).